We begin with the raw amino-acid sequence, 1070 residues long: Error-prone DNA polymerase (1070 aa).

This sequence belongs to the DNA polymerase type-C family. DnaE2 subfamily.

It localises to the cytoplasm. The enzyme catalyses DNA(n) + a 2'-deoxyribonucleoside 5'-triphosphate = DNA(n+1) + diphosphate. Functionally, DNA polymerase involved in damage-induced mutagenesis and translesion synthesis (TLS). It is not the major replicative DNA polymerase. The chain is Error-prone DNA polymerase from Aromatoleum aromaticum (strain DSM 19018 / LMG 30748 / EbN1) (Azoarcus sp. (strain EbN1)).